A 213-amino-acid polypeptide reads, in one-letter code: N-(5'-phosphoribosyl)anthranilate isomerase (213 aa).

This sequence belongs to the TrpF family.

The catalysed reaction is N-(5-phospho-beta-D-ribosyl)anthranilate = 1-(2-carboxyphenylamino)-1-deoxy-D-ribulose 5-phosphate. Its pathway is amino-acid biosynthesis; L-tryptophan biosynthesis; L-tryptophan from chorismate: step 3/5. The protein is N-(5'-phosphoribosyl)anthranilate isomerase of Methanocella arvoryzae (strain DSM 22066 / NBRC 105507 / MRE50).